Reading from the N-terminus, the 210-residue chain is Putative protein-lysine deacylase ABHD14B (210 aa).

S91 is subject to Phosphoserine. Active-site charge relay system residues include S111, D162, and H188.

Belongs to the AB hydrolase superfamily. ABHD14 family. In terms of assembly, may interact with TAF1.

The protein localises to the cytoplasm. It localises to the nucleus. The catalysed reaction is L-lysyl-[protein] + acetyl-CoA = N(6)-acetyl-L-lysyl-[protein] + CoA + H(+). In terms of biological role, acts as an atypical protein-lysine deacetylase in vitro. Catalyzes the deacetylation of lysine residues using CoA as substrate, generating acetyl-CoA and the free amine of protein-lysine residues. Additional experiments are however required to confirm the protein-lysine deacetylase activity in vivo. Has hydrolase activity towards various surrogate p-nitrophenyl (pNp) substrates, such as pNp-butyrate, pNp-acetate and pNp-octanoate in vitro, with a strong preference for pNp-acetate. May activate transcription. This is Putative protein-lysine deacylase ABHD14B from Rattus norvegicus (Rat).